The chain runs to 1089 residues: Probable transport protein MmpL8 (1089 aa).

The tract at residues 1–26 (MCDVLMQPVRTPRPSTNLRSKPLRPT) is disordered. 12 helical membrane-spanning segments follow: residues 44-64 (WVVI…VPSL), 222-242 (ITIL…TMVL), 257-277 (LVAI…IFMS), 316-336 (IGKV…GMVF), 349-369 (LGIS…ALMV), 400-420 (KTHL…AGLA), 555-575 (AIST…LLGG), 874-894 (IIAM…RAIV), 898-918 (YLIG…VIVF), 930-950 (IPGL…MLLI), 973-993 (GGVI…LVFA), and 996-1016 (GSVV…TFLV). The disordered stretch occupies residues 1056–1078 (RTKRKPLLPKEEEEQSPPDDDDL). Acidic residues predominate over residues 1066 to 1078 (EEEEQSPPDDDDL).

Belongs to the resistance-nodulation-cell division (RND) (TC 2.A.6) family. MmpL subfamily.

Its subcellular location is the cell membrane. This chain is Probable transport protein MmpL8 (mmpL8), found in Mycobacterium bovis (strain ATCC BAA-935 / AF2122/97).